A 211-amino-acid chain; its full sequence is Urease accessory protein UreE (211 aa).

Residues 170–211 (EHHGHSHDRGCDHSHSHSHDHDHDHGHVHGPGCGHAPHHRHD) form a disordered region. Basic and acidic residues predominate over residues 176–196 (HDRGCDHSHSHSHDHDHDHGH).

The protein belongs to the UreE family.

It localises to the cytoplasm. Its function is as follows. Involved in urease metallocenter assembly. Binds nickel. Probably functions as a nickel donor during metallocenter assembly. The polypeptide is Urease accessory protein UreE (Ralstonia nicotianae (strain ATCC BAA-1114 / GMI1000) (Ralstonia solanacearum)).